The chain runs to 126 residues: MAVPNELKYSKEHEWVKVEGNVATIGITEYAQSELGDIVFVELPETDDEINEGDTFGSVESVKTVSELYAPISGKVVEVNEELEDSPEFVNESPYEKAWMVKVEISDESQLEALLTAEKYSEMIGE.

The 83-residue stretch at 22-104 (VATIGITEYA…YEKAWMVKVE (83 aa)) folds into the Lipoyl-binding domain. Lys63 bears the N6-lipoyllysine mark.

This sequence belongs to the GcvH family. In terms of assembly, the glycine cleavage system is composed of four proteins: P, T, L and H. It depends on (R)-lipoate as a cofactor.

In terms of biological role, the glycine cleavage system catalyzes the degradation of glycine. The H protein shuttles the methylamine group of glycine from the P protein to the T protein. Is also involved in protein lipoylation via its role as an octanoyl/lipoyl carrier protein intermediate. The chain is Glycine cleavage system H protein from Staphylococcus aureus (strain JH1).